Here is a 231-residue protein sequence, read N- to C-terminus: 7-cyano-7-deazaguanine synthase (231 aa).

Residue 7–17 participates in ATP binding; that stretch reads LSSGLDSVAAL. Zn(2+) contacts are provided by Cys195, Cys203, Cys206, and Cys209.

This sequence belongs to the QueC family. The cofactor is Zn(2+).

It carries out the reaction 7-carboxy-7-deazaguanine + NH4(+) + ATP = 7-cyano-7-deazaguanine + ADP + phosphate + H2O + H(+). The protein operates within purine metabolism; 7-cyano-7-deazaguanine biosynthesis. Functionally, catalyzes the ATP-dependent conversion of 7-carboxy-7-deazaguanine (CDG) to 7-cyano-7-deazaguanine (preQ(0)). The protein is 7-cyano-7-deazaguanine synthase of Methanosarcina barkeri (strain Fusaro / DSM 804).